A 297-amino-acid polypeptide reads, in one-letter code: uncharacterized protein (297 aa).

One can recognise an HTH lysR-type domain in the interval 1-60; it reads MNIELRHLRYFVAVAEELHFGRAAARLNISQPPLSQQIQALEQQIGARLLARTNRSVLLT. Positions 20 to 40 form a DNA-binding region, H-T-H motif; that stretch reads FGRAAARLNISQPPLSQQIQA.

This sequence belongs to the LysR transcriptional regulatory family.

This is an uncharacterized protein from Escherichia coli (strain K12).